The primary structure comprises 101 residues: Apolipoprotein C-II (101 aa).

The signal sequence occupies residues 1–22; that stretch reads MGTRCLLVLLLVLLVLKCEVQG. A propeptide spans 23-28 (removed in mature form); the sequence is DDMARQ. The interval 66–74 is lipid binding; sequence AMDEKIRDM. A lipoprotein lipase cofactor region spans residues 78–101; it reads STAAVRIYTGILTDQILSMLTGDP.

Belongs to the apolipoprotein C2 family. Proapolipoprotein C-II is synthesized as a sialic acid containing glycoprotein which is subsequently desialylated prior to its proteolytic processing. Post-translationally, proapolipoprotein C-II, the major form found in plasma undergoes proteolytic cleavage of its N-terminal hexapeptide to generate the mature form apolipoprotein C-II, which occurs as the minor form in plasma.

It is found in the secreted. Component of chylomicrons, very low-density lipoproteins (VLDL), low-density lipoproteins (LDL), and high-density lipoproteins (HDL) in plasma. Plays an important role in lipoprotein metabolism as an activator of lipoprotein lipase, the enzyme which hydrolyzes the triacylglycerols on chylomicrons and VLDL. The sequence is that of Apolipoprotein C-II (APOC2) from Panthera tigris altaica (Siberian tiger).